The sequence spans 354 residues: MSLDKIMNEAISPWMKGDGPDSDIVLSSRIRLARNFKKYQFSTMQNEEETKQIQELFKKEFINKTVEPFGEFELLKMNELTPLQRRVLVEKHLISPNLAGTEYGACLLSESEHISVMLNEEDHIRIQCLFSGLQLSEALQSANQIDNWIEKEVEYAFDESLGYITSCPTNVGTGLRASVMIHLPGLVLTKRISRIIQVIQKLGLVVRGIYGEGSEALGNIFQVSNQMTLGKSEEDIIADLKSVIQQIIQQEKMARELIVQNSSIELEDKVYRSYGILANSRLIQSAEAANCLSDLRLGIDLGYIQGISRNILTELMVLTQPGILQQYAGGPLGPEERDYRRATLIRERLRIEKN.

The Phosphagen kinase C-terminal domain occupies 24 to 254; sequence IVLSSRIRLA…QQIIQQEKMA (231 aa). ATP contacts are provided by residues 27–31, histidine 92, arginine 125, 176–180, and 207–212; these read SSRIR, RASVM, and RGIYGE. The short motif at 337 to 342 is the RDXXRA motif of the pArg binding pocket involved in allosteric regulation element; it reads RDYRRA.

It belongs to the ATP:guanido phosphotransferase family.

The enzyme catalyses L-arginyl-[protein] + ATP = N(omega)-phospho-L-arginyl-[protein] + ADP + H(+). Its activity is regulated as follows. Appears to be allosterically activated by the binding of pArg-containing polypeptides to the pArg-binding pocket localized in the C-terminal domain of McsB. Its function is as follows. Catalyzes the specific phosphorylation of arginine residues in a large number of proteins. Is part of the bacterial stress response system. Protein arginine phosphorylation has a physiologically important role and is involved in the regulation of many critical cellular processes, such as protein homeostasis, motility, competence, and stringent and stress responses, by regulating gene expression and protein activity. The sequence is that of Protein-arginine kinase from Bacillus anthracis (strain A0248).